A 194-amino-acid chain; its full sequence is Porimin (194 aa).

Positions 1-24 (MALCARAALLLGALQVLALPGAVA) are cleaved as a signal peptide. Residues 25 to 151 (QETYAQGSPS…PTKGKGSKFD (127 aa)) are Extracellular-facing. Residues asparagine 36, asparagine 47, asparagine 51, asparagine 59, asparagine 76, and asparagine 114 are each glycosylated (N-linked (GlcNAc...) asparagine). Positions 88–124 (KVSTPGVSPHVTPSASKSTPKTSASPNSTQTSASMTT) are disordered. Residues 99-124 (TPSASKSTPKTSASPNSTQTSASMTT) show a composition bias toward low complexity. A helical transmembrane segment spans residues 152–172 (AGSFVGGIVLTLGVLSILYIG). At 173–194 (CKMYYSRRGIRYRSIDEHDAII) the chain is on the cytoplasmic side. A Phosphoserine modification is found at serine 186.

This sequence belongs to the CD164 family.

The protein localises to the membrane. Implicated in oncotic cell death, characterized by cell swelling, organelle swelling, vacuolization and increased membrane permeability. In Rattus norvegicus (Rat), this protein is Porimin (Tmem123).